Consider the following 258-residue polypeptide: UPF0246 protein YaaA (258 aa).

This sequence belongs to the UPF0246 family.

In Shigella flexneri serotype 5b (strain 8401), this protein is UPF0246 protein YaaA.